A 419-amino-acid polypeptide reads, in one-letter code: eIF5-mimic protein 2 (419 aa).

Met1 is modified (N-acetylmethionine). Positions 1–15 (MNNQKQQKPTLSGQR) are enriched in polar residues. The tract at residues 1–26 (MNNQKQQKPTLSGQRFKTRKRDEKER) is disordered. Ser12 bears the Phosphoserine mark. In terms of domain architecture, W2 spans 247-414 (NQQTIGARKE…KNAEEESESE (168 aa)). Lys368 participates in a covalent cross-link: Glycyl lysine isopeptide (Lys-Gly) (interchain with G-Cter in SUMO2). 2 positions are modified to phosphoserine: Ser411 and Ser413.

It belongs to the BZW family.

Translation initiation regulator which represses repeat-associated non-AUG (RAN) initiated translation probably by acting as a competitive inhibitor of eukaryotic translation initiation factor 5 (EIF5) function. Enhances histone H4 gene transcription but does not seem to bind DNA directly. This is eIF5-mimic protein 2 (BZW1) from Homo sapiens (Human).